A 352-amino-acid polypeptide reads, in one-letter code: DNA polymerase IV (352 aa).

In terms of domain architecture, UmuC spans 4–185; that stretch reads IIHVDMDCFF…LPLSKIPGVG (182 aa). Mg(2+) is bound by residues D8 and D103. E104 is a catalytic residue.

It belongs to the DNA polymerase type-Y family. Monomer. Requires Mg(2+) as cofactor.

Its subcellular location is the cytoplasm. The enzyme catalyses DNA(n) + a 2'-deoxyribonucleoside 5'-triphosphate = DNA(n+1) + diphosphate. Functionally, poorly processive, error-prone DNA polymerase involved in untargeted mutagenesis. Copies undamaged DNA at stalled replication forks, which arise in vivo from mismatched or misaligned primer ends. These misaligned primers can be extended by PolIV. Exhibits no 3'-5' exonuclease (proofreading) activity. May be involved in translesional synthesis, in conjunction with the beta clamp from PolIII. The chain is DNA polymerase IV from Yersinia pestis bv. Antiqua (strain Antiqua).